The sequence spans 336 residues: Zinc-type alcohol dehydrogenase-like protein SE_1777 (336 aa).

Belongs to the zinc-containing alcohol dehydrogenase family. Quinone oxidoreductase subfamily.

The polypeptide is Zinc-type alcohol dehydrogenase-like protein SE_1777 (Staphylococcus epidermidis (strain ATCC 12228 / FDA PCI 1200)).